The chain runs to 202 residues: MRLNFTKLFAGAVALAWTTESMATNAVTAHLSPLSRSLDHIQSDDSTQRRLRTINGADEERFSRMSMAGLRRALELELKEMHLESVATNQLVVRICTILGIEVAKSTPTNLNKLAELIKVEKEAENVAKKVQNPVDQADVILGLLIYPVKQGDVLGNKLLEKWPLLPKKAIINRFHRLKNHEVPKEPQPFAAHVHAPVVVAH.

Residues 1-23 form the signal peptide; it reads MRLNFTKLFAGAVALAWTTESMA. The RxLR-dEER signature appears at 49 to 61; sequence RRLRTINGADEER.

Belongs to the RxLR effector family.

It localises to the secreted. Its subcellular location is the host cytoplasm. The protein resides in the host nucleus. In terms of biological role, effector that acts as a broad suppressor of cell death to interrupt plant immunity. Inhibits cell death induced by cell death-inducing proteins, including the PAMP elicitor INF1 from P.infestans. In Plasmopara viticola (Downy mildew of grapevine), this protein is Secreted RxLR effector protein 11.